The chain runs to 420 residues: Glucose-1-phosphate adenylyltransferase (420 aa).

Residues Tyr-107, Gly-172, 187–188 (EK), and Ser-205 each bind alpha-D-glucose 1-phosphate.

The protein belongs to the bacterial/plant glucose-1-phosphate adenylyltransferase family. Homotetramer.

The catalysed reaction is alpha-D-glucose 1-phosphate + ATP + H(+) = ADP-alpha-D-glucose + diphosphate. It functions in the pathway glycan biosynthesis; glycogen biosynthesis. Its function is as follows. Involved in the biosynthesis of ADP-glucose, a building block required for the elongation reactions to produce glycogen. Catalyzes the reaction between ATP and alpha-D-glucose 1-phosphate (G1P) to produce pyrophosphate and ADP-Glc. The chain is Glucose-1-phosphate adenylyltransferase from Rhizobium meliloti (strain 1021) (Ensifer meliloti).